Here is a 1456-residue protein sequence, read N- to C-terminus: Alpha-2-macroglobulin-like protein 1 (1456 aa).

Positions 1–19 (MVPTILLSALLLHFTDVVA) are cleaved as a signal peptide. Residues N48, N172, and N868 are each glycosylated (N-linked (GlcNAc...) asparagine).

The protein belongs to the protease inhibitor I39 (alpha-2-macroglobulin) family. Homotetramer; consists of two dimer pairs that are disulfide-linked. Part of a complex composed of complement component C3, CLCA1/CLCA3, A2ML1/OH and ALB/serum albumin.

The protein localises to the secreted. Inhibits protease gelatinolytic complex activity against type 1 collagen. This chain is Alpha-2-macroglobulin-like protein 1, found in Mus musculus (Mouse).